The sequence spans 440 residues: Transposon Ty1-DR2 Gag polyprotein (440 aa).

Composition is skewed to polar residues over residues 1–31 (MESQ…TTQD) and 137–168 (VGTH…TNQH). 3 disordered regions span residues 1–75 (MESQ…PQAA), 137–174 (VGTH…PPPI), and 350–440 (QQES…PGTY). Residues 299-401 (NNGIPINNKV…NSQSRTARAH (103 aa)) are RNA-binding. Residues 363–372 (SPSDEKKDSR) are compositionally biased toward basic and acidic residues. Positions 373–409 (TYTNTTKPKSITRNSQKPNNSQSRTARAHNVSTSNNF) are enriched in polar residues. The segment covering 429 to 440 (NKHDLHLRPGTY) has biased composition (basic and acidic residues).

Homotrimer.

The protein localises to the cytoplasm. Functionally, capsid protein (CA) is the structural component of the virus-like particle (VLP), forming the shell that encapsulates the retrotransposons dimeric RNA genome. The particles are assembled from trimer-clustered units and there are holes in the capsid shells that allow for the diffusion of macromolecules. CA also has nucleocapsid-like chaperone activity, promoting primer tRNA(i)-Met annealing to the multipartite primer-binding site (PBS), dimerization of Ty1 RNA and initiation of reverse transcription. In Saccharomyces cerevisiae (strain ATCC 204508 / S288c) (Baker's yeast), this protein is Transposon Ty1-DR2 Gag polyprotein (TY1A-DR2).